A 222-amino-acid chain; its full sequence is N-(5'-phosphoribosyl)anthranilate isomerase (222 aa).

The protein belongs to the TrpF family.

The enzyme catalyses N-(5-phospho-beta-D-ribosyl)anthranilate = 1-(2-carboxyphenylamino)-1-deoxy-D-ribulose 5-phosphate. Its pathway is amino-acid biosynthesis; L-tryptophan biosynthesis; L-tryptophan from chorismate: step 3/5. The chain is N-(5'-phosphoribosyl)anthranilate isomerase from Beijerinckia indica subsp. indica (strain ATCC 9039 / DSM 1715 / NCIMB 8712).